The sequence spans 226 residues: Staphylococcal superantigen-like 1 (226 aa).

Positions 1–30 (MKFKAIAKASLALGMLATGVITSNVQSVQA) are cleaved as a signal peptide.

Belongs to the staphylococcal/streptococcal toxin family. As to quaternary structure, homodimer.

It is found in the secreted. In terms of biological role, mediates virulence by proteolytically cleaving host proteins, including collagens types I and IV as well as human cytokines IL8, IL17A, and IFN-gamma. The chain is Staphylococcal superantigen-like 1 from Staphylococcus aureus (strain NCTC 8325 / PS 47).